Consider the following 731-residue polypeptide: Ribonuclease R (731 aa).

The RNB domain occupies 260–589 (RTDLRHFPFF…LHRVIKYLLF (330 aa)). Positions 647-728 (GCILNGVISN…NEKKIELSLY (82 aa)) constitute an S1 motif domain.

The protein belongs to the RNR ribonuclease family. RNase R subfamily. Monomer.

It is found in the cytoplasm. It carries out the reaction Exonucleolytic cleavage in the 3'- to 5'-direction to yield nucleoside 5'-phosphates.. 3'-5' exoribonuclease that releases 5'-nucleoside monophosphates and is involved in maturation of structured RNAs. The polypeptide is Ribonuclease R (Buchnera aphidicola subsp. Acyrthosiphon pisum (strain APS) (Acyrthosiphon pisum symbiotic bacterium)).